A 60-amino-acid polypeptide reads, in one-letter code: Beta-defensin 11 (60 aa).

Positions 1–22 (MRLHHLLLALLFLVLSAGSGIS) are cleaved as a signal peptide. 3 disulfides stabilise this stretch: Cys27-Cys56, Cys34-Cys49, and Cys39-Cys57.

Belongs to the beta-defensin family. In terms of tissue distribution, neutrophilic granules.

It is found in the secreted. Has bactericidal activity. Active against E.coli ML35 and S.aureus 502A. The protein is Beta-defensin 11 (DEFB11) of Bos taurus (Bovine).